Consider the following 296-residue polypeptide: Aquaporin PIP1-6 (296 aa).

The next 2 helical transmembrane spans lie at 63-83 (IAEFVATFLFLYVTVLTVMGV) and 98-120 (IAWAFGGMIFALVYCTAGVSGGH). The NPA 1 signature appears at 122–124 (NPA). 3 helical membrane passes run 141-161 (VYYVVMQCLGAVCGAGVVKAF), 183-203 (GDGLGAEVVGTFVLVYTVFSA), and 217-237 (ALAPLPIGFAVFLVHLATIPI). Residues 243–245 (NPA) carry the NPA 2 motif. Residues 265-285 (IFWVGPFAGAALAAVYHQVVL) form a helical membrane-spanning segment.

It belongs to the MIP/aquaporin (TC 1.A.8) family. PIP (TC 1.A.8.11) subfamily.

The protein localises to the cell membrane. In terms of biological role, aquaporins facilitate the transport of water and small neutral solutes across cell membranes. The chain is Aquaporin PIP1-6 (PIP1-6) from Zea mays (Maize).